A 116-amino-acid polypeptide reads, in one-letter code: MYEQAIVIRNDLKMGKGKMAAQACHASIQAYLHAQKISPSAVMYWMNEGQKKVVLKVNSEKELLEIFRDVNIDGLPCSLIRDAGKTQIEPGSLTAVGIGPEKEDKISKVTKNLKLL.

Belongs to the PTH2 family.

The protein localises to the cytoplasm. The catalysed reaction is an N-acyl-L-alpha-aminoacyl-tRNA + H2O = an N-acyl-L-amino acid + a tRNA + H(+). Functionally, the natural substrate for this enzyme may be peptidyl-tRNAs which drop off the ribosome during protein synthesis. This Methanococcus vannielii (strain ATCC 35089 / DSM 1224 / JCM 13029 / OCM 148 / SB) protein is Peptidyl-tRNA hydrolase.